Reading from the N-terminus, the 286-residue chain is Shikimate dehydrogenase (NADP(+)) (286 aa).

Shikimate contacts are provided by residues 20 to 22 (SLS) and Thr-67. Lys-71 acts as the Proton acceptor in catalysis. Shikimate-binding residues include Asn-92 and Asp-107. NADP(+) is bound by residues 132-136 (GAGGA) and Met-228. Tyr-230 contributes to the shikimate binding site. Gly-251 provides a ligand contact to NADP(+).

The protein belongs to the shikimate dehydrogenase family. Homodimer.

It carries out the reaction shikimate + NADP(+) = 3-dehydroshikimate + NADPH + H(+). The protein operates within metabolic intermediate biosynthesis; chorismate biosynthesis; chorismate from D-erythrose 4-phosphate and phosphoenolpyruvate: step 4/7. Involved in the biosynthesis of the chorismate, which leads to the biosynthesis of aromatic amino acids. Catalyzes the reversible NADPH linked reduction of 3-dehydroshikimate (DHSA) to yield shikimate (SA). In Geobacter metallireducens (strain ATCC 53774 / DSM 7210 / GS-15), this protein is Shikimate dehydrogenase (NADP(+)).